We begin with the raw amino-acid sequence, 457 residues long: UDP-N-acetylmuramoyl-tripeptide--D-alanyl-D-alanine ligase (457 aa).

109–115 (GSSGKTT) contributes to the ATP binding site.

Belongs to the MurCDEF family. MurF subfamily.

Its subcellular location is the cytoplasm. It catalyses the reaction D-alanyl-D-alanine + UDP-N-acetyl-alpha-D-muramoyl-L-alanyl-gamma-D-glutamyl-meso-2,6-diaminopimelate + ATP = UDP-N-acetyl-alpha-D-muramoyl-L-alanyl-gamma-D-glutamyl-meso-2,6-diaminopimeloyl-D-alanyl-D-alanine + ADP + phosphate + H(+). It functions in the pathway cell wall biogenesis; peptidoglycan biosynthesis. Its function is as follows. Involved in cell wall formation. Catalyzes the final step in the synthesis of UDP-N-acetylmuramoyl-pentapeptide, the precursor of murein. The protein is UDP-N-acetylmuramoyl-tripeptide--D-alanyl-D-alanine ligase of Haemophilus influenzae (strain ATCC 51907 / DSM 11121 / KW20 / Rd).